The chain runs to 325 residues: Pyruvate dehydrogenase E1 component subunit beta (325 aa).

Residue Glu60 coordinates thiamine diphosphate.

In terms of assembly, heterodimer of an alpha and a beta chain. Thiamine diphosphate is required as a cofactor.

The catalysed reaction is N(6)-[(R)-lipoyl]-L-lysyl-[protein] + pyruvate + H(+) = N(6)-[(R)-S(8)-acetyldihydrolipoyl]-L-lysyl-[protein] + CO2. Functionally, the pyruvate dehydrogenase complex catalyzes the overall conversion of pyruvate to acetyl-CoA and CO(2). It contains multiple copies of three enzymatic components: pyruvate dehydrogenase (E1), dihydrolipoamide acetyltransferase (E2) and lipoamide dehydrogenase (E3). This Geobacillus stearothermophilus (Bacillus stearothermophilus) protein is Pyruvate dehydrogenase E1 component subunit beta (pdhB).